We begin with the raw amino-acid sequence, 708 residues long: Quinohemoprotein alcohol dehydrogenase (708 aa).

The first 31 residues, 1 to 31, serve as a signal peptide directing secretion; it reads MERLIDNSHGWPGRMVWLLAACLGSAAAFAQ. Position 101 (glutamate 101) interacts with pyrroloquinoline quinone. Cysteine 147 and cysteine 148 are oxidised to a cystine. Pyrroloquinoline quinone-binding positions include arginine 153, threonine 198, and 214–215; that span reads GA. A Ca(2+)-binding site is contributed by glutamate 216. Threonine 274 contacts pyrroloquinoline quinone. The Ca(2+) site is built by asparagine 294 and aspartate 339. Aspartate 339 serves as the catalytic Proton acceptor. Pyrroloquinoline quinone contacts are provided by residues lysine 366, 425 to 426, and valine 575; that span reads NW. The 90-residue stretch at 619–708 folds into the Cytochrome c domain; that stretch reads YDPAKVEAGT…GTADAIRPKP (90 aa). Cysteine 635, cysteine 638, histidine 639, and methionine 678 together coordinate heme c.

This sequence belongs to the bacterial PQQ dehydrogenase family. Monomer. The cofactor is pyrroloquinoline quinone. It depends on Ca(2+) as a cofactor. Heme c serves as cofactor. In the crystallographic structures Trp-543 is oxidized to 2'-hydroxytryptophan.

Its subcellular location is the periplasm. The catalysed reaction is 2 oxidized [azurin] + a primary alcohol = 2 reduced [azurin] + an aldehyde + 2 H(+). Its function is as follows. Catalyzes the dye-linked oxidation of primary alcohols to the corresponding aldehydes and the (subsequent) oxidation of the aldehydes to carboxylic acids. Methanol is not a substrate. This chain is Quinohemoprotein alcohol dehydrogenase, found in Comamonas testosteroni (Pseudomonas testosteroni).